The primary structure comprises 970 residues: Anaphase-promoting complex subunit 3 (970 aa).

TPR repeat units lie at residues 35-68, 74-107, 142-175, and 185-218; these read EDNLFKIAQIYYQMGKINQCLLILQQHPQITMIK, ALSNYDLGNIQEAESSIIKCCIYFEKYFQPNNNN, NNNSNSNNNENEYYGIYSDILCEFDDIVDINSIS, and GSVYYLMGLISKRKNQKEKAIKYLKKSVYTYPFL. The tract at residues 106 to 149 is disordered; sequence NNNNNNNNNNNNNNNNNNNNNNNKDKCNNSNKNNDSNNNSNSNN. A disordered region spans residues 274–300; sequence KVNNNNNNNNNNNNNINNNNSSNKNNE. 2 TPR repeats span residues 319-353 and 361-394; these read IKPNNFIKPPYHPNHRVGLTPSSFYDSSIHITPIN and TNQQQQQQQQQQPQQPSQQNLQKYNNRYFVTPQT. Disordered stretches follow at residues 358 to 379, 414 to 525, and 556 to 582; these read IQQTNQQQQQQQQQQPQQPSQQ, PIPM…TTTT, and SSLSDDDYDEENHHYQQHHHLHHHNKS. The span at 359–379 shows a compositional bias: low complexity; that stretch reads QQTNQQQQQQQQQQPQQPSQQ. Positions 424 to 443 are enriched in polar residues; sequence SKGSQHPPSSNSQTPYTPST. Positions 446–460 are enriched in basic residues; the sequence is VHHHQKQQPHQHKKS. A compositionally biased stretch (low complexity) spans 500–525; sequence TSSTSKQQQQQQQTKQQTTTTTTTTT. TPR repeat units follow at residues 546–580, 636–671, 672–705, 740–773, 775–807, 808–841, 843–876, 878–910, and 911–944; these read TEEFSLKSLSSSLSDDDYDEENHHYQQHHHLHHHN, LELFFILADSYRLLCLYLCKEAIESFKRLSEEQYRT, GWVLTKVAKAYHELIDYKEARSIFQEVSQMEPYR, PYSWVVVGNCFSLQRDHEAAIKLFRRAIQLDPDM, YAYTLCGHEYLANDELELALNAFRMAIRCDPRH, YNAFYGIGLIYYRQEKYNLAEYHFRKALSINESS, VLCCYLGMTLQHNPNKIQDGIDMLYRSIEIQPKN, FAKFKLAAFLFANQQYHHAIDQLLEFKEIEPKE, and TPIYILLGKCYKQLGELDKALDSLNTALDLDPKN. Residues 570-580 show a composition bias toward basic residues; sequence YQQHHHLHHHN.

Belongs to the APC3/CDC27 family. In terms of assembly, the APC/C is composed of at least 13 subunits that stay tightly associated throughout the cell cycle: anapc1, anapc2, anapc3, anapc4, anapc5, anapc6, anapc7, anapc8, anapc10, anapc11, cdc20, cdc26 and cdh1.

It is found in the nucleus. The protein operates within protein modification; protein ubiquitination. Its function is as follows. Component of the anaphase promoting complex/cyclosome (APC/C), a cell cycle-regulated E3 ubiquitin-protein ligase complex that controls progression through mitosis and the G1 phase of the cell cycle. The protein is Anaphase-promoting complex subunit 3 (anapc3) of Dictyostelium discoideum (Social amoeba).